We begin with the raw amino-acid sequence, 450 residues long: NADP-specific glutamate dehydrogenase (450 aa).

Lys-111 is a catalytic residue.

Belongs to the Glu/Leu/Phe/Val dehydrogenases family. As to quaternary structure, homohexamer.

It catalyses the reaction L-glutamate + NADP(+) + H2O = 2-oxoglutarate + NH4(+) + NADPH + H(+). The chain is NADP-specific glutamate dehydrogenase (GDHA) from Laccaria bicolor (strain S238N-H82 / ATCC MYA-4686) (Bicoloured deceiver).